The sequence spans 82 residues: CLAVATA3/ESR (CLE)-related protein 53 (82 aa).

Residues 1–26 (MATSTNSREFLIFICVLTLLVVRSEA) form the signal peptide. A hydroxyproline mark is found at Pro-74 and Pro-77. A glycan (O-linked (Ara...) hydroxyproline) is linked at Pro-77.

Belongs to the CLV3/ESR signal peptide family. The O-glycosylation (arabinosylation) of the hydroxyproline Pro-77 enhances binding affinity of the CLE53p peptide for its receptor. In terms of tissue distribution, expressed in root vasculature.

It localises to the secreted. It is found in the extracellular space. Signaling peptide involved in the regulation of root colonization by arbuscular mycorrhizal (AM) fungi. Moves from root to shoot to function with the receptor kinase SUNN, in a signaling pathway that repress strigolactone biosynthetic genes and strigolactone content in the roots, and consequently reduces the promotion of further colonization by AM fungi. The sequence is that of CLAVATA3/ESR (CLE)-related protein 53 from Medicago truncatula (Barrel medic).